The following is a 668-amino-acid chain: MKHYAIQPANLEFNAEGTPVSRDFDDVYFSNDNGLEETRYVFLGGNQLEVRFPEHPHPLFVVAESGFGTGLNFLTLWQAFDQFREAHPQAQLQRLHFISFEKFPLTRADLALAHLHWPELTPWAEQLQAQWPMPLPGCHRLLLDEGRVTLDLWFGDINELTSQLDDSLNQKVDAWFLDGFAPAKNPDMWTQNLFNAMARLARPGGTLATFTSAGFVRRGLQEAGFTMQKRKGFGRKREMLCGVMEQALPLPCSTPWFNRTGSSKREAAIIGGGIASALLSLALLRRGWQVTLYCADEAPALGASGNRQGALYPLLSKHDEALNRFFSNAFTFARRFYDSLPVKFDHDWCSVTQLGWDEKSQHKIAQMLSMDLPADLAVAVGANEVEGVTGVVTNCGGITYPQGGWLCPAELTRSVLELAQQQGLQIRYQHQLQDLSRKDDGWLLNFAGDQQATHSVVVLANGHQISRFSQTSSLPVYSVAGQVSHIPTTPELAKLKQVLCYDGYLTPQNPANQHHCIGASYHRGSEDTAYSEDDQQQNRQRLIDCFPQAQWAKEVDVSEKEARCGVRCATRDHLPMVGNVPDYEATLVEYASLAEQKDKAVSAPVYDDLFMLAALGSRGLCSAPLCAEILAAQMSDEPIPMDASTLAALNPNRLWVRKLLKGKAVKAG.

The segment at 1-245 (MKHYAIQPAN…KREMLCGVME (245 aa)) is tRNA (mnm(5)s(2)U34)-methyltransferase. The FAD-dependent cmnm(5)s(2)U34 oxidoreductase stretch occupies residues 270–668 (IGGGIASALL…LLKGKAVKAG (399 aa)).

This sequence in the N-terminal section; belongs to the methyltransferase superfamily. tRNA (mnm(5)s(2)U34)-methyltransferase family. In the C-terminal section; belongs to the DAO family. FAD is required as a cofactor.

It localises to the cytoplasm. The enzyme catalyses 5-aminomethyl-2-thiouridine(34) in tRNA + S-adenosyl-L-methionine = 5-methylaminomethyl-2-thiouridine(34) in tRNA + S-adenosyl-L-homocysteine + H(+). Functionally, catalyzes the last two steps in the biosynthesis of 5-methylaminomethyl-2-thiouridine (mnm(5)s(2)U) at the wobble position (U34) in tRNA. Catalyzes the FAD-dependent demodification of cmnm(5)s(2)U34 to nm(5)s(2)U34, followed by the transfer of a methyl group from S-adenosyl-L-methionine to nm(5)s(2)U34, to form mnm(5)s(2)U34. In Escherichia coli O139:H28 (strain E24377A / ETEC), this protein is tRNA 5-methylaminomethyl-2-thiouridine biosynthesis bifunctional protein MnmC.